A 240-amino-acid polypeptide reads, in one-letter code: Lectin (240 aa).

Residues Glu127 and Asp129 each contribute to the Mn(2+) site. Residues Asp129, Tyr131, Asn133, and Asp138 each contribute to the Ca(2+) site. Mn(2+) contacts are provided by Asp138 and His143.

The protein belongs to the leguminous lectin family. As to quaternary structure, heterotetramer of two alpha and two beta chains; disulfide bond linked.

In terms of biological role, binds preferentially to oligosaccharides bearing the sequence Man-alpha-1-&gt;2 Man-alpha-1-&gt;6 Man-alpha-1-&gt;6Man found in early steps of glycoprotein processing in the endoplasmic reticulum. It binds weakly to highly processed oligosaccharide structures. The sequence is that of Lectin from Leucomphalos mildbraedii (Bowringia mildbraedii).